The following is a 232-amino-acid chain: Flagellar L-ring protein (232 aa).

The first 21 residues, 1–21 (MQKNAAHTYAISSLLVLSLTG), serve as a signal peptide directing secretion. Residue Cys-22 is the site of N-palmitoyl cysteine attachment. Cys-22 carries the S-diacylglycerol cysteine lipid modification.

Belongs to the FlgH family. As to quaternary structure, the basal body constitutes a major portion of the flagellar organelle and consists of four rings (L,P,S, and M) mounted on a central rod.

It is found in the cell outer membrane. The protein localises to the bacterial flagellum basal body. Functionally, assembles around the rod to form the L-ring and probably protects the motor/basal body from shearing forces during rotation. This chain is Flagellar L-ring protein, found in Shigella boydii serotype 18 (strain CDC 3083-94 / BS512).